Here is a 485-residue protein sequence, read N- to C-terminus: ATP synthase subunit beta (485 aa).

The segment at 1-20 is disordered; it reads MSTTKTTKMTVKTGSKGTSG. 170-177 lines the ATP pocket; sequence GGAGVGKT.

Belongs to the ATPase alpha/beta chains family. In terms of assembly, F-type ATPases have 2 components, CF(1) - the catalytic core - and CF(0) - the membrane proton channel. CF(1) has five subunits: alpha(3), beta(3), gamma(1), delta(1), epsilon(1). CF(0) has three main subunits: a(1), b(2) and c(9-12). The alpha and beta chains form an alternating ring which encloses part of the gamma chain. CF(1) is attached to CF(0) by a central stalk formed by the gamma and epsilon chains, while a peripheral stalk is formed by the delta and b chains.

Its subcellular location is the cell membrane. The catalysed reaction is ATP + H2O + 4 H(+)(in) = ADP + phosphate + 5 H(+)(out). Its function is as follows. Produces ATP from ADP in the presence of a proton gradient across the membrane. The catalytic sites are hosted primarily by the beta subunits. This Mycobacterium leprae (strain TN) protein is ATP synthase subunit beta.